The primary structure comprises 911 residues: Protein argonaute 4B (911 aa).

Disordered regions lie at residues 1–51 and 149–171; these read MDAH…RPGL and KTAANGSPGGNDSPGGSDRKRVR. The region spanning 281 to 396 is the PAZ domain; sequence PVIDFLLANQ…FPIELCSLIP (116 aa). The Piwi domain maps to 565–872; the sequence is FLLCLLPERK…AAAQVGTFLK (308 aa).

Belongs to the argonaute family. Ago subfamily.

Probably involved in the RNA silencing pathway. May bind to short RNAs such as microRNAs (miRNAs) or short interfering RNAs (siRNAs), and represses the translation of mRNAs which are complementary to them. In Oryza sativa subsp. japonica (Rice), this protein is Protein argonaute 4B (AGO4B).